Consider the following 123-residue polypeptide: Cyclic ether formation enzyme xenC (123 aa).

The N-terminal stretch at 1 to 24 is a signal peptide; it reads MSSLLLSDVLSYGIFGFSALCVQA. The next 2 helical transmembrane spans lie at 58-78 and 102-122; these read SALR…LWSP and LGES…AILV.

Belongs to the cyclic ether formation enzyme xenC family.

It is found in the membrane. The protein operates within mycotoxin biosynthesis. Cyclic ether formation enzyme; part of the gene cluster that mediates the biosynthesis of xenoacremones such as xenoacremone A, a compound that shows inhibitory activity toward the PI3K/AKT signaling pathway and which has the ability to induce apoptosis of A549 lung cancer cells. Within the pathway, cooperation of the hybrid PKS-NRPS xenE and the trans-acting enoyl reductase xenG is responsible for the formation of the reduced tyrosine-nonaketide derivative. The alpha/beta hydrolase xenA then accelerates intramolecular nucleophilic attack to give a pyrrolidone derivative. Subsequently, three enzymes, xenF, xenD, and xenC, coordinately participate in the conversion to xenoacremone B. XenF catalyzes sigmatropic rearrangement to form an A-ring, which leads to an unusual intermediate with a hexane ring, which is required for the formation of the tricarbocyclic product. Epoxidation catalyzed by xenD and the formation of the paracyclophane ether catalyzed by xenC initiate a spontaneous intramolecular Diels-Alder (IMDA) reaction to yield xenoacremone B. Spontaneous hydration of xenoacremone B leads to the formation of xenoacremone A, which undergoes subsequent methylation to afford xenoacremone C. This chain is Cyclic ether formation enzyme xenC, found in Xenoacremonium sinensis (Endophyte fungus).